The primary structure comprises 127 residues: Large ribosomal subunit protein uL24 (127 aa).

Belongs to the universal ribosomal protein uL24 family. In terms of assembly, component of the large ribosomal subunit. Mature ribosomes consist of a small (40S) and a large (60S) subunit. The 40S subunit contains about 32 different proteins and 1 molecule of RNA (18S). The 60S subunit contains 45 different proteins and 3 molecules of RNA (25S, 5.8S and 5S).

It is found in the cytoplasm. Its function is as follows. Component of the ribosome, a large ribonucleoprotein complex responsible for the synthesis of proteins in the cell. The small ribosomal subunit (SSU) binds messenger RNAs (mRNAs) and translates the encoded message by selecting cognate aminoacyl-transfer RNA (tRNA) molecules. The large subunit (LSU) contains the ribosomal catalytic site termed the peptidyl transferase center (PTC), which catalyzes the formation of peptide bonds, thereby polymerizing the amino acids delivered by tRNAs into a polypeptide chain. The nascent polypeptides leave the ribosome through a tunnel in the LSU and interact with protein factors that function in enzymatic processing, targeting, and the membrane insertion of nascent chains at the exit of the ribosomal tunnel. This is Large ribosomal subunit protein uL24 from Candida albicans (strain SC5314 / ATCC MYA-2876) (Yeast).